The primary structure comprises 204 residues: Superoxide dismutase [Mn] (204 aa).

Mn(2+) is bound at residue histidine 27. Phosphothreonine is present on residues threonine 34 and threonine 70. Residues histidine 82, aspartate 164, and histidine 168 each coordinate Mn(2+).

This sequence belongs to the iron/manganese superoxide dismutase family. Homodimer. Requires Mn(2+) as cofactor.

The enzyme catalyses 2 superoxide + 2 H(+) = H2O2 + O2. Its function is as follows. Destroys superoxide anion radicals which are normally produced within the cells and which are toxic to biological systems. The chain is Superoxide dismutase [Mn] (sodA) from Bacillus caldotenax.